Consider the following 536-residue polypeptide: CTP synthase (536 aa).

An amidoligase domain region spans residues 1-267; the sequence is MSKFVFVTGG…CKETLNYLEL (267 aa). Ser13 contacts CTP. A UTP-binding site is contributed by Ser13. Residues 14 to 19 and Asp71 each bind ATP; that span reads SIGKGI. Mg(2+) is bound by residues Asp71 and Glu141. Residues 148–150, 188–193, and Lys224 contribute to the CTP site; these read DIE and KTKPTQ. UTP is bound by residues 188–193 and Lys224; that span reads KTKPTQ. A Glutamine amidotransferase type-1 domain is found at 292 to 534; the sequence is KVALVGKYIE…IKASQDKLTQ (243 aa). Residue Gly354 participates in L-glutamine binding. The Nucleophile; for glutamine hydrolysis role is filled by Cys381. Residues 382-385, Glu405, and Arg462 contribute to the L-glutamine site; that span reads LGMQ. Residues His507 and Glu509 contribute to the active site.

Belongs to the CTP synthase family. In terms of assembly, homotetramer.

The enzyme catalyses UTP + L-glutamine + ATP + H2O = CTP + L-glutamate + ADP + phosphate + 2 H(+). It carries out the reaction L-glutamine + H2O = L-glutamate + NH4(+). The catalysed reaction is UTP + NH4(+) + ATP = CTP + ADP + phosphate + 2 H(+). The protein operates within pyrimidine metabolism; CTP biosynthesis via de novo pathway; CTP from UDP: step 2/2. Allosterically activated by GTP, when glutamine is the substrate; GTP has no effect on the reaction when ammonia is the substrate. The allosteric effector GTP functions by stabilizing the protein conformation that binds the tetrahedral intermediate(s) formed during glutamine hydrolysis. Inhibited by the product CTP, via allosteric rather than competitive inhibition. Functionally, catalyzes the ATP-dependent amination of UTP to CTP with either L-glutamine or ammonia as the source of nitrogen. Regulates intracellular CTP levels through interactions with the four ribonucleotide triphosphates. In Prochlorococcus marinus (strain MIT 9301), this protein is CTP synthase.